The primary structure comprises 66 residues: MAKGKDARLTVILECTSCVRNGVNKESPGISRYITQKNRHNTSSRLELRKYCRYCYKHTIHGEIKK.

Belongs to the bacterial ribosomal protein bL33 family.

Its subcellular location is the plastid. The protein resides in the chloroplast. The polypeptide is Large ribosomal subunit protein bL33c (Acorus calamus (Sweet flag)).